A 496-amino-acid polypeptide reads, in one-letter code: Apolipoprotein N-acyltransferase (496 aa).

The next 6 membrane-spanning stretches (helical) occupy residues 23-43 (GIAT…FILW), 50-70 (LANF…LYEL), 84-104 (LIIS…LVYL), 126-146 (LTIK…ILSQ), 171-191 (WIGA…IYLI), and 205-225 (FLFG…TNPI). In terms of domain architecture, CN hydrolase spans 236 to 464 (WQTNMPTREK…NDVVNPNFSI (229 aa)). Catalysis depends on E276, which acts as the Proton acceptor. The active site involves K325. The active-site Nucleophile is the C374. Residues 476-496 (PLFLLCLFLIGLNLYFGKFTN) form a helical membrane-spanning segment.

This sequence belongs to the CN hydrolase family. Apolipoprotein N-acyltransferase subfamily.

It is found in the cell inner membrane. The enzyme catalyses N-terminal S-1,2-diacyl-sn-glyceryl-L-cysteinyl-[lipoprotein] + a glycerophospholipid = N-acyl-S-1,2-diacyl-sn-glyceryl-L-cysteinyl-[lipoprotein] + a 2-acyl-sn-glycero-3-phospholipid + H(+). It participates in protein modification; lipoprotein biosynthesis (N-acyl transfer). Its function is as follows. Catalyzes the phospholipid dependent N-acylation of the N-terminal cysteine of apolipoprotein, the last step in lipoprotein maturation. The protein is Apolipoprotein N-acyltransferase of Prochlorococcus marinus subsp. pastoris (strain CCMP1986 / NIES-2087 / MED4).